A 536-amino-acid chain; its full sequence is L-aspartate oxidase 2 (536 aa).

FAD contacts are provided by residues 22–25 and 51–58; these read EGLA and SSYWAQGG. R284 functions as the Proton donor/acceptor in the catalytic mechanism. Residues E369 and 385 to 386 contribute to the FAD site; that span reads SL.

This sequence belongs to the FAD-dependent oxidoreductase 2 family. NadB subfamily. The cofactor is FAD.

It localises to the cytoplasm. The catalysed reaction is L-aspartate + O2 = iminosuccinate + H2O2. The protein operates within cofactor biosynthesis; NAD(+) biosynthesis; iminoaspartate from L-aspartate (oxidase route): step 1/1. In terms of biological role, catalyzes the oxidation of L-aspartate to iminoaspartate, the first step in the de novo biosynthesis of NAD(+). This chain is L-aspartate oxidase 2 (nadB2), found in Ralstonia nicotianae (strain ATCC BAA-1114 / GMI1000) (Ralstonia solanacearum).